The primary structure comprises 716 residues: 1,4-alpha-glucan branching enzyme GlgB (716 aa).

Catalysis depends on Asp394, which acts as the Nucleophile. The active-site Proton donor is the Glu447.

It belongs to the glycosyl hydrolase 13 family. GlgB subfamily. Monomer.

The catalysed reaction is Transfers a segment of a (1-&gt;4)-alpha-D-glucan chain to a primary hydroxy group in a similar glucan chain.. It participates in glycan biosynthesis; glycogen biosynthesis. In terms of biological role, catalyzes the formation of the alpha-1,6-glucosidic linkages in glycogen by scission of a 1,4-alpha-linked oligosaccharide from growing alpha-1,4-glucan chains and the subsequent attachment of the oligosaccharide to the alpha-1,6 position. The chain is 1,4-alpha-glucan branching enzyme GlgB from Photobacterium profundum (strain SS9).